A 410-amino-acid polypeptide reads, in one-letter code: Serine proteinase inhibitor A3K (410 aa).

The first 24 residues, 1 to 24 (MPSAISRGLLLLAGLCYLVFGIMA), serve as a signal peptide directing secretion. Residues N62, N99, N162, N229, and N263 are each glycosylated (N-linked (GlcNAc...) asparagine). An RCL region spans residues 360–381 (GTEAAAATVLEATRTARPPRLS).

The protein belongs to the serpin family.

The protein localises to the secreted. It localises to the extracellular space. Functionally, contrapsin inhibits trypsin-like proteases. The sequence is that of Serine proteinase inhibitor A3K (SERPINA3K) from Cavia porcellus (Guinea pig).